Reading from the N-terminus, the 166-residue chain is Large ribosomal subunit protein uL10 (166 aa).

It belongs to the universal ribosomal protein uL10 family. In terms of assembly, part of the ribosomal stalk of the 50S ribosomal subunit. The N-terminus interacts with L11 and the large rRNA to form the base of the stalk. The C-terminus forms an elongated spine to which L12 dimers bind in a sequential fashion forming a multimeric L10(L12)X complex.

Its function is as follows. Forms part of the ribosomal stalk, playing a central role in the interaction of the ribosome with GTP-bound translation factors. The sequence is that of Large ribosomal subunit protein uL10 (rplJ) from Streptococcus pyogenes serotype M18 (strain MGAS8232).